Reading from the N-terminus, the 977-residue chain is Vacuolar membrane protease (977 aa).

Topologically, residues 1–17 are cytoplasmic; the sequence is MARSRTAGRCNPFAFYR. A helical membrane pass occupies residues 18 to 38; it reads VPVTVFVTLIYVALLAPIIVV. The Vacuolar portion of the chain corresponds to 39 to 383; the sequence is HHILPAVPES…AFAVFEIHTL (345 aa). Asn-113 and Asn-116 each carry an N-linked (GlcNAc...) asparagine glycan. Zn(2+)-binding residues include His-166 and Asp-178. Glu-212 acts as the Proton acceptor in catalysis. Zn(2+) contacts are provided by Glu-213, Glu-238, and His-311. A helical membrane pass occupies residues 384-404; it reads FALSVTLLIVGPLTLFITSII. At 405-438 the chain is on the cytoplasmic side; the sequence is LANQDRMYLFGISVPVDDGFGSVPLRGWRGFFRF. Residues 439 to 459 form a helical membrane-spanning segment; sequence PFIFGSTTASVVALAYLMAKI. Topologically, residues 460–469 are vacuolar; that stretch reads NPMIAHSSEY. A helical transmembrane segment spans residues 470 to 490; that stretch reads AVWSMMISAWVFVAWFLSRIA. Residues 491 to 500 are Cytoplasmic-facing; that stretch reads NFARPSALHR. The chain crosses the membrane as a helical span at residues 501–521; that stretch reads IYVLTWMFLLTWVLLVITTVY. Topologically, residues 522 to 525 are vacuolar; the sequence is ENRD. Residues 526 to 546 form a helical membrane-spanning segment; it reads GIASGYFVIFYAFGTFMATWI. The Cytoplasmic portion of the chain corresponds to 547-659; it reads SYLELFSLPK…WSANLPKWTW (113 aa). The span at 566-576 shows a compositional bias: polar residues; sequence GQISSRPTSLG. Residues 566 to 604 are disordered; the sequence is GQISSRPTSLGGSRLLTPSGESVGQHPEDEEPTESTSLL. A helical transmembrane segment spans residues 660–680; it reads ILQFLLIAPIVIILIGQLGLL. Residues 681-696 lie on the Vacuolar side of the membrane; it reads ITSAIHQTMQDGSSTL. A helical membrane pass occupies residues 697–717; that stretch reads VPYLIIALLTTFLFMPTLPFI. The Cytoplasmic segment spans residues 718–726; that stretch reads HRYTYHIPT. The helical transmembrane segment at 727–747 threads the bilayer; the sequence is FLFLIFVATLVYNLVAFPFSG. Residues 748 to 977 are Vacuolar-facing; that stretch reads NNRTKLFFLQ…LVKGSRSFEV (230 aa). N-linked (GlcNAc...) asparagine glycans are attached at residues Asn-749 and Asn-791.

Belongs to the peptidase M28 family. It depends on Zn(2+) as a cofactor.

It is found in the vacuole membrane. In terms of biological role, may be involved in vacuolar sorting and osmoregulation. This is Vacuolar membrane protease from Talaromyces marneffei (strain ATCC 18224 / CBS 334.59 / QM 7333) (Penicillium marneffei).